The following is a 212-amino-acid chain: Thiamine-phosphate synthase (212 aa).

Residues 40-44 (QFREK) and asparagine 75 contribute to the 4-amino-2-methyl-5-(diphosphooxymethyl)pyrimidine site. Positions 76 and 95 each coordinate Mg(2+). Position 113 (serine 113) interacts with 4-amino-2-methyl-5-(diphosphooxymethyl)pyrimidine. 139–141 (TSS) contributes to the 2-[(2R,5Z)-2-carboxy-4-methylthiazol-5(2H)-ylidene]ethyl phosphate binding site. Lysine 142 serves as a coordination point for 4-amino-2-methyl-5-(diphosphooxymethyl)pyrimidine. 2-[(2R,5Z)-2-carboxy-4-methylthiazol-5(2H)-ylidene]ethyl phosphate contacts are provided by residues glycine 171 and 191–192 (IS).

It belongs to the thiamine-phosphate synthase family. Mg(2+) serves as cofactor.

It carries out the reaction 2-[(2R,5Z)-2-carboxy-4-methylthiazol-5(2H)-ylidene]ethyl phosphate + 4-amino-2-methyl-5-(diphosphooxymethyl)pyrimidine + 2 H(+) = thiamine phosphate + CO2 + diphosphate. The enzyme catalyses 2-(2-carboxy-4-methylthiazol-5-yl)ethyl phosphate + 4-amino-2-methyl-5-(diphosphooxymethyl)pyrimidine + 2 H(+) = thiamine phosphate + CO2 + diphosphate. It catalyses the reaction 4-methyl-5-(2-phosphooxyethyl)-thiazole + 4-amino-2-methyl-5-(diphosphooxymethyl)pyrimidine + H(+) = thiamine phosphate + diphosphate. The protein operates within cofactor biosynthesis; thiamine diphosphate biosynthesis; thiamine phosphate from 4-amino-2-methyl-5-diphosphomethylpyrimidine and 4-methyl-5-(2-phosphoethyl)-thiazole: step 1/1. Functionally, condenses 4-methyl-5-(beta-hydroxyethyl)thiazole monophosphate (THZ-P) and 2-methyl-4-amino-5-hydroxymethyl pyrimidine pyrophosphate (HMP-PP) to form thiamine monophosphate (TMP). This is Thiamine-phosphate synthase from Staphylococcus epidermidis (strain ATCC 35984 / DSM 28319 / BCRC 17069 / CCUG 31568 / BM 3577 / RP62A).